The chain runs to 287 residues: Uroplakin-3a (287 aa).

An N-terminal signal peptide occupies residues 1 to 18 (MLLLWALLALGCLRCGWT). The Lumenal segment spans residues 19–207 (VNLQPQLASV…DTWPGRRSGG (189 aa)). N-linked (GlcNAc...) asparagine glycans are attached at residues asparagine 74, asparagine 139, and asparagine 170. Residues 208 to 235 (MIVITSILGSLPFFLLVGFAGAIILSFV) form a helical membrane-spanning segment. The Cytoplasmic portion of the chain corresponds to 236–287 (DMGSSDGEMTHDSQITQEAVPKTLGTSEPSYSSVNRGPPLDRAEVFSSKLQD). A disordered region spans residues 243–287 (EMTHDSQITQEAVPKTLGTSEPSYSSVNRGPPLDRAEVFSSKLQD). Residues 259–270 (LGTSEPSYSSVN) are compositionally biased toward polar residues.

It belongs to the uroplakin-3 family. In terms of assembly, heterodimer with uroplakin-1B (UPK1B).

The protein resides in the endoplasmic reticulum membrane. Its function is as follows. Component of the asymmetric unit membrane (AUM); a highly specialized biomembrane elaborated by terminally differentiated urothelial cells. May play an important role in AUM-cytoskeleton interaction in terminally differentiated urothelial cells. It also contributes to the formation of urothelial glycocalyx which may play an important role in preventing bacterial adherence. In Mus musculus (Mouse), this protein is Uroplakin-3a (Upk3a).